The primary structure comprises 184 residues: Photosystem I assembly protein Ycf4 (184 aa).

2 helical membrane passes run 19-39 (ISNF…LLVG) and 57-77 (IVFF…LFIS).

It belongs to the Ycf4 family.

The protein resides in the plastid. It is found in the chloroplast thylakoid membrane. In terms of biological role, seems to be required for the assembly of the photosystem I complex. This Atropa belladonna (Belladonna) protein is Photosystem I assembly protein Ycf4.